A 37-amino-acid polypeptide reads, in one-letter code: Defensin-A (37 aa).

3 cysteine pairs are disulfide-bonded: Cys-4/Cys-25, Cys-10/Cys-33, and Cys-14/Cys-35.

It is found in the secreted. Its function is as follows. Has antibacterial activity against M.luteus and E.coli. The chain is Defensin-A from Mytilus edulis (Blue mussel).